Reading from the N-terminus, the 1005-residue chain is Espin-like protein (1005 aa).

10 ANK repeats span residues 1–31, 35–64, 69–99, 103–132, 136–166, 170–200, 204–234, 238–267, 270–299, and 303–332; these read MEAQ…RPDI, LGAG…LPGN, NGAT…GLQD, SGVS…AATL, EGAL…GVNQ, SGAS…DVRL, DGMS…GLTA, EGAT…PIMR, WGGT…DPFL, and DGYT…PVRV. 2 disordered regions span residues 355 to 383 and 458 to 480; these read EERR…VPRE and ADHP…AAEQ. Positions 458–469 are enriched in basic and acidic residues; the sequence is ADHPPEDQDQSQ. Residues 502–539 adopt a coiled-coil conformation; the sequence is EDDLVYLEKQINDLQLRRRCQEYESELGRLAAQLQALL. Disordered regions lie at residues 611-643, 692-729, 764-794, and 951-975; these read LAQG…QREI, PRGD…GPGL, LEAQ…PRLG, and PHAS…SQGS.

In terms of assembly, interacts with MYO3A (via C-terminus). Interacts with MYO3B (via C-terminus). Expressed in inner ear hair cells. Expressed in utricle hair bundles (at protein level). Expressed in choclea (at protein level).

It localises to the cell projection. The protein localises to the stereocilium. In terms of biological role, binds to but does not cross-link actin. Required for the formation and maintenance of inner ear hair cell stereocilia and staircase formation. Essential for normal hearing. This is Espin-like protein (Espnl) from Mus musculus (Mouse).